A 379-amino-acid chain; its full sequence is Cyclic dinucleotide synthase CdnE (379 aa).

Positions 107, 109, 123, and 179 each coordinate UTP. Asp123 serves as a coordination point for Mg(2+). Residue Asp193 participates in Mg(2+) binding. Residues Asn229, Lys257, and Ser274 each contribute to the UTP site. The Pyrimidine specificity motif (R/Q)xW in donor pocket signature appears at 328 to 330; the sequence is KIF.

This sequence belongs to the CD-NTase family. E02 subfamily. Mg(2+) serves as cofactor.

It carries out the reaction 2 UTP = c-di-UMP + 2 diphosphate. The catalysed reaction is UTP + ATP = 3',3'-cUAMP + 2 diphosphate. It catalyses the reaction UTP + CTP = cyclic CMP-UMP + 2 diphosphate. Its function is as follows. Cyclic nucleotide synthase (second messenger synthase) of a CBASS antivirus system. CBASS (cyclic oligonucleotide-based antiphage signaling system) provides immunity against bacteriophage. The CD-NTase protein synthesizes cyclic nucleotides in response to infection; these serve as specific second messenger signals. The signals activate a diverse range of effectors, leading to bacterial cell death and thus abortive phage infection. The effector protein for this system is membrane protein Cap15. A type I-B(UU) CBASS system. In terms of biological role, cyclic dinucleotide synthase that preferentially catalyzes the synthesis of 3',3'-cyclic UMP-UMP (c-di-UMP) and 3',3'-cyclic UMP-AMP, with minor amounts of 3',3'-cyclic UMP-CMP, which are second messengers for cell signal transduction. Functionally, protects E.coli against phage infection. When the CBASS operon (cap15-cdnE) is introduced in E.coli MG1655 it protects against phages T2, T4, T5, T6, SECPhi4, SECPhi6, SECPhi17, SECPhi18 and SECPhi27, but not against phage T7. The protein is Cyclic dinucleotide synthase CdnE of Yersinia aleksiciae.